The primary structure comprises 141 residues: Cystatin-S (141 aa).

A signal peptide spans 1–27 (MAYLLHAQLFLLTTFILVLNMRLCPVL). The short motif at 76 to 80 (QVVAG) is the Secondary area of contact element. 2 disulfides stabilise this stretch: cysteine 94–cysteine 104 and cysteine 118–cysteine 138.

Belongs to the cystatin family. Found in saliva, tears, urine and seminal fluid.

It localises to the secreted. In terms of biological role, this protein strongly inhibits papain and ficin, partially inhibits stem bromelain and bovine cathepsin C, but does not inhibit porcine cathepsin B or clostripain. Papain is inhibited non-competitively. This chain is Cystatin-S (Cst4), found in Rattus norvegicus (Rat).